A 388-amino-acid polypeptide reads, in one-letter code: FBD-associated F-box protein At5g60610 (388 aa).

One can recognise an F-box domain in the interval 1–47 (MDRISGLPDELLVKIISFVPTKVAVSTSILSKRWESLWKWVPKLECD). Positions 337 to 388 (NWKNIQRSVPKCLKSSLKTLEFAGYTARPEERDFLSFIFKKARCLKTSSISH) constitute an FBD domain.

In Arabidopsis thaliana (Mouse-ear cress), this protein is FBD-associated F-box protein At5g60610.